Reading from the N-terminus, the 344-residue chain is MPALPVIDIRSNHVEDSLPEQIIKGLTSQPKTLPPLLFYSNEGLEHWNHHSRQPDFYPRRQEIEILKQGGNDIARSIAPSSVILDLGSANLEKVGYLLEALEAQEKDVLYFALDISAPQLATTLKEIPSSNFRHVRFAGLHGTFEDGLRWINETPEIRDLPHCVLLLGLTIGNFSRQNAAAFLQNIANHALTGASKNKSSILLSLDSCKVPTKVTRAYTSDGVVPFALQALTYAKALLCDRIDNGIDEKVLSCNLRPEHWHYLSEWNFALGRHEASLIPRFGDVCLGSMLQDIIVKKEEKVRFACSYKYDAKERQKLFLDSGVDQGMVWTNEGCDVAIYELKLA.

This sequence belongs to the methyltransferase superfamily. Homodimer.

It catalyses the reaction 4-(3-methylbut-2-enyl)-L-tryptophan + S-adenosyl-L-methionine = 4-(3-methylbut-2-enyl)-L-abrine + S-adenosyl-L-homocysteine + H(+). It functions in the pathway alkaloid biosynthesis; ergot alkaloid biosynthesis. 4-dimethylallyltryptophan N-methyltransferase; part of the gene cluster that mediates the biosynthesis of fungal ergot alkaloid. DmaW catalyzes the first step of ergot alkaloid biosynthesis by condensing dimethylallyl diphosphate (DMAP) and tryptophan to form 4-dimethylallyl-L-tryptophan. The second step is catalyzed by the methyltransferase easF that methylates 4-dimethylallyl-L-tryptophan in the presence of S-adenosyl-L-methionine, resulting in the formation of 4-dimethylallyl-L-abrine. The catalase easC and the FAD-dependent oxidoreductase easE then transform 4-dimethylallyl-L-abrine to chanoclavine-I which is further oxidized by easD in the presence of NAD(+), resulting in the formation of chanoclavine-I aldehyde. Agroclavine dehydrogenase easG then mediates the conversion of chanoclavine-I aldehyde to agroclavine via a non-enzymatic adduct reaction: the substrate is an iminium intermediate that is formed spontaneously from chanoclavine-I aldehyde in the presence of glutathione. The presence of easA is not required to complete this reaction. Further conversion of agroclavine to paspalic acid is a two-step process involving oxidation of agroclavine to elymoclavine and of elymoclavine to paspalic acid, the second step being performed by the elymoclavine oxidase cloA. Paspalic acid is then further converted to D-lysergic acid. Ergopeptines are assembled from D-lysergic acid and three different amino acids by the D-lysergyl-peptide-synthetases composed each of a monomudular and a trimodular nonribosomal peptide synthetase subunit. LpsB and lpsC encode the monomodular subunits responsible for D-lysergic acid activation and incorporation into the ergopeptine backbone. LpsA1 and A2 subunits encode the trimodular nonribosomal peptide synthetase assembling the tripeptide portion of ergopeptines. LpsA1 is responsible for formation of the major ergopeptine, ergotamine, and lpsA2 for alpha-ergocryptine, the minor ergopeptine of the total alkaloid mixture elaborated by C.purpurea. D-lysergyl-tripeptides are assembled by the nonribosomal peptide synthetases and released as N-(D-lysergyl-aminoacyl)-lactams. Cyclolization of the D-lysergyl-tripeptides is performed by the Fe(2+)/2-ketoglutarate-dependent dioxygenase easH which introduces a hydroxyl group into N-(D-lysergyl-aminoacyl)-lactam at alpha-C of the aminoacyl residue followed by spontaneous condensation with the terminal lactam carbonyl group. In Claviceps purpurea (strain 20.1) (Ergot fungus), this protein is 4-dimethylallyltryptophan N-methyltransferase easF.